We begin with the raw amino-acid sequence, 542 residues long: Formate--tetrahydrofolate ligase (542 aa).

53–60 contacts ATP; that stretch reads TPAGEGKT.

The protein belongs to the formate--tetrahydrofolate ligase family.

The enzyme catalyses (6S)-5,6,7,8-tetrahydrofolate + formate + ATP = (6R)-10-formyltetrahydrofolate + ADP + phosphate. It participates in one-carbon metabolism; tetrahydrofolate interconversion. This is Formate--tetrahydrofolate ligase from Thermotoga petrophila (strain ATCC BAA-488 / DSM 13995 / JCM 10881 / RKU-1).